We begin with the raw amino-acid sequence, 148 residues long: Protoporphyrinogen IX oxidase (148 aa).

Helical transmembrane passes span 7–27 (YFLW…AALF), 59–79 (FIAS…LLIA), 86–106 (GGWL…HFYC), and 128–148 (FNEI…VKPF). Histidine 15 contributes to the heme binding site. Heme is bound at residue lysine 92.

The protein belongs to the HemJ family. In terms of assembly, homodimer. Heme b serves as cofactor.

It is found in the cell membrane. The catalysed reaction is protoporphyrinogen IX + 3 A = protoporphyrin IX + 3 AH2. Its pathway is porphyrin-containing compound metabolism; protoporphyrin-IX biosynthesis; protoporphyrin-IX from protoporphyrinogen-IX: step 1/1. Catalyzes the oxidation of protoporphyrinogen IX to protoporphyrin IX. Is involved in the biosynthesis of tetrapyrrole molecules like heme. Does not use oxygen or artificial electron acceptors such as menadione or benzoquinone. The sequence is that of Protoporphyrinogen IX oxidase from Helicobacter pylori (strain J99 / ATCC 700824) (Campylobacter pylori J99).